A 61-amino-acid chain; its full sequence is Large ribosomal subunit protein bL32 (61 aa).

Basic residues predominate over residues 1 to 16; sequence MAVPKRKTSPSRRGMR. The disordered stretch occupies residues 1 to 61; that stretch reads MAVPKRKTSP…RQILKPKAEA (61 aa). Residues 28–44 show a composition bias toward basic and acidic residues; sequence VEDKDSGELRRPHHLDL.

This sequence belongs to the bacterial ribosomal protein bL32 family.

The sequence is that of Large ribosomal subunit protein bL32 from Xanthobacter autotrophicus (strain ATCC BAA-1158 / Py2).